We begin with the raw amino-acid sequence, 322 residues long: AA9 family lytic polysaccharide monooxygenase A (322 aa).

Positions 1–15 (MKVLSLLAAASAASA) are cleaved as a signal peptide. Cu(2+) is bound by residues histidine 16 and histidine 96. 2 disulfide bridges follow: cysteine 54–cysteine 182 and cysteine 152–cysteine 237. O2 is bound by residues histidine 168 and glutamine 177. O-linked (Man...) threonine glycosylation is found at threonine 228 and threonine 236. In terms of domain architecture, CBM1 spans 286-322 (CTAAQWAQCGGMGFSGCTTCASPYTCKKMNDYYSQCS).

Belongs to the polysaccharide monooxygenase AA9 family. Requires Cu(2+) as cofactor.

It is found in the secreted. It catalyses the reaction [(1-&gt;4)-beta-D-glucosyl]n+m + reduced acceptor + O2 = 4-dehydro-beta-D-glucosyl-[(1-&gt;4)-beta-D-glucosyl]n-1 + [(1-&gt;4)-beta-D-glucosyl]m + acceptor + H2O.. Its function is as follows. Lytic polysaccharide monooxygenase (LPMO) that depolymerizes crystalline and amorphous polysaccharides via the oxidation of scissile alpha- or beta-(1-4)-glycosidic bonds, yielding C4 oxidation products. Catalysis by LPMOs requires the reduction of the active-site copper from Cu(II) to Cu(I) by a reducing agent and H(2)O(2) or O(2) as a cosubstrate. Active on tamarind xyloglucan and konjac glucomannan. This Neurospora crassa (strain ATCC 24698 / 74-OR23-1A / CBS 708.71 / DSM 1257 / FGSC 987) protein is AA9 family lytic polysaccharide monooxygenase A (gh61-1).